Reading from the N-terminus, the 65-residue chain is Neurotoxin BmK AGAP-SYPU2 (65 aa).

In terms of domain architecture, LCN-type CS-alpha/beta spans 2 to 64 (KDGYIVDDKN…VPIRVPGRCN (63 aa)). 4 disulfides stabilise this stretch: Cys12-Cys63, Cys16-Cys36, Cys22-Cys46, and Cys26-Cys48.

In terms of tissue distribution, expressed by the venom gland.

It is found in the secreted. In terms of biological role, alpha toxins bind voltage-independently at site-3 of sodium channels and inhibit the inactivation of the activated channels, thereby blocking neuronal transmission. In vivo, shows analgesic activity (ED(50) is 1.42 mg/kg) and antitumor activity against Ehrlich ascites tumor and S-180 fibrosarcoma models. The chain is Neurotoxin BmK AGAP-SYPU2 from Olivierus martensii (Manchurian scorpion).